The sequence spans 258 residues: Na(+)-translocating NADH-quinone reductase subunit C (258 aa).

The helical transmembrane segment at 14–34 threads the bilayer; the sequence is LIVVLAVSLICSVIVAGAVVG. Ser-226 carries the post-translational modification FMN phosphoryl serine.

This sequence belongs to the NqrC family. As to quaternary structure, composed of six subunits; NqrA, NqrB, NqrC, NqrD, NqrE and NqrF. Requires FMN as cofactor.

The protein localises to the cell inner membrane. The catalysed reaction is a ubiquinone + n Na(+)(in) + NADH + H(+) = a ubiquinol + n Na(+)(out) + NAD(+). Its function is as follows. NQR complex catalyzes the reduction of ubiquinone-1 to ubiquinol by two successive reactions, coupled with the transport of Na(+) ions from the cytoplasm to the periplasm. NqrA to NqrE are probably involved in the second step, the conversion of ubisemiquinone to ubiquinol. This chain is Na(+)-translocating NADH-quinone reductase subunit C, found in Neisseria meningitidis serogroup A / serotype 4A (strain DSM 15465 / Z2491).